The primary structure comprises 85 residues: Homeobox protein liguleless 3 (85 aa).

Residues 1-21 enclose the ELK domain; that stretch reads ELKEMLLKKYSGCLSRLRSEF. Positions 22–85 form a DNA-binding region, homeobox; TALE-type; it reads LKKRKKGKLP…NQRKRHWKPS (64 aa).

It belongs to the TALE/KNOX homeobox family.

It is found in the nucleus. In terms of biological role, probably binds to the DNA sequence 5'-TGAC-3'. This Zea mays (Maize) protein is Homeobox protein liguleless 3 (LG3).